Consider the following 126-residue polypeptide: Bleomycin resistance protein (126 aa).

Residues 1–119 form the VOC domain; sequence MTDQATPNLP…DGTLLRLIQN (119 aa).

It belongs to the bleomycin resistance protein family.

Functionally, binding protein with a strong affinity to the bleomycin family of antibiotics. Binds to CL990; an antimitotic-antibiotic compound. The chain is Bleomycin resistance protein (ble) from Klebsiella pneumoniae.